We begin with the raw amino-acid sequence, 455 residues long: Adhesin YadA (455 aa).

The signal sequence occupies residues 1-25; the sequence is MTKDFKISVSAALISALFSSPYAFA. The segment at 26–363 is surface exposed passenger domain; that stretch reads DDYDGIPNLT…KKAIRESNQY (338 aa). Residues 209–243 are a coiled coil; the sequence is VNVAQLKKEIEKTQENTNKRSAELLANANAYADNK. Positions 364 to 402 are outer membrane translocation of the passenger domain; sequence TDHKFRQLDNRLDKLDTRVDKGLASSAALNSLFQPYGVG. Beta stranded transmembrane passes span 402–412, 416–427, 434–440, and 444–455; these read GKVNFTAGVGG, SQALAIGSGYRV, KAGVAYA, and DVMYNASFNIEW. The interval 403–455 is translocator domain; it reads KVNFTAGVGGYRSSQALAIGSGYRVNENVALKAGVAYAGSSDVMYNASFNIEW.

The protein belongs to the autotransporter-2 (AT-2) (TC 1.B.40) family. Homotrimer; in gels migrates as monomers, dimers and homotrimers. Does not form trimers with distantly related EibA from E.coli; coexpression was lethal and one of the genes is eliminated in vivo. If the full translocator domain (368-455) is exchanged with that of EibA ('299-392'), will form heterotrimers with EibA and vice-versa.

The protein resides in the cell surface. It is found in the cell outer membrane. In terms of biological role, collagen-binding outer membrane protein forming a fibrillar matrix on the bacterial cell surface. Promotes initial attachment and invasion of eukaryotic cells. Also protects the bacteria by being responsible for agglutination, serum resistance, complement inactivation and phagocytosis resistance. In Yersinia enterocolitica, this protein is Adhesin YadA (yadA).